The chain runs to 243 residues: MTYCLRIADIPTNERPRERLMTHGPKVLATAELIAILLGTGQGPGKLSAVGLGQYLLQELGKNQRDPLAVLREVTPAELMQIPGIGPAKATSILAAVELGKRTFQFRPLDKTPIDSPVAAVAALSQDLMWQNQERFAVLLLDVKNRLLGTQVITIGTATETLASPREIFREIIRQGATRTIVAHNHPSGNVEPSPEDIELTRQLLAGAQLLGIPLLDHLILGNGNHQSLREITTLWNDYPQGD.

The region spanning Pro113–Leu235 is the MPN domain. Residues His184, His186, and Asp197 each contribute to the Zn(2+) site. Residues His184–Asp197 carry the JAMM motif motif.

This sequence belongs to the UPF0758 family.

In Nostoc sp. (strain PCC 7120 / SAG 25.82 / UTEX 2576), this protein is UPF0758 protein alr2351.